A 253-amino-acid chain; its full sequence is Sulfate transporter CysZ (253 aa).

4 helical membrane passes run 31–51 (FVILPLLVNILLMGGAFWWLF), 75–95 (LLWPLAVISVLLVFGYFFSTI), 151–171 (IVLLILYFIPGIGQTVAPVLW), and 222–242 (IPLLNLFIMPVAVCGATAMWV).

Belongs to the CysZ family.

It is found in the cell inner membrane. Functionally, high affinity, high specificity proton-dependent sulfate transporter, which mediates sulfate uptake. Provides the sulfur source for the cysteine synthesis pathway. This Escherichia coli O7:K1 (strain IAI39 / ExPEC) protein is Sulfate transporter CysZ.